The primary structure comprises 336 residues: Potassium channel subfamily K member 1 (336 aa).

Topologically, residues 1–20 (MLQSLAGSSCVRLVERHRSA) are cytoplasmic. The helical transmembrane segment at 21–41 (WCFGFLVLGYLLYLVFGAVVF) threads the bilayer. At 42-103 (SSVELPYEDL…SNASGNWNWD (62 aa)) the chain is on the extracellular side. N-linked (GlcNAc...) asparagine glycosylation occurs at asparagine 95. The helical intramembrane region spans 104 to 116 (FTSALFFASTVLS). The stretch at 117 to 122 (TTGYGH) is an intramembrane region. Residues 117–122 (TTGYGH) form a selectivity filter 1 region. The Extracellular portion of the chain corresponds to 123–132 (TVPLSDGGKA). The helical transmembrane segment at 133–156 (FCIIYSVIGIPFTLLFLTAVVQRV) threads the bilayer. Residues 157 to 181 (TIHVTRRPVLYFHVRWGFSKQAVAI) are Cytoplasmic-facing. A helical transmembrane segment spans residues 182-202 (VHAVLLGVVTVSCFFFIPAAV). Residues 203 to 211 (FSVLEDDWN) lie on the Extracellular side of the membrane. The helical intramembrane region spans 212–224 (FLESFYFCFISLS). Residues 225 to 230 (TIGLGD) are selectivity filter 2. The stretch at 225–231 (TIGLGDY) is an intramembrane region. At 232–243 (VPGEGYNQKFRE) the chain is on the extracellular side. The chain crosses the membrane as a helical span at residues 244 to 267 (LYKIGITCYLLLGLIAMLVVLETF). Residues 268 to 336 (CELHELKKFR…PALADGASDH (69 aa)) are Cytoplasmic-facing. Residue lysine 274 forms a Glycyl lysine isopeptide (Lys-Gly) (interchain with G-Cter in SUMO) linkage. An important for intracellular retention in recycling endosomes region spans residues 293-299 (IIEHDQL). Residues 307-336 (QAAGVQEDQKQNEPFVSPQPPALADGASDH) form a disordered region.

The protein belongs to the two pore domain potassium channel (TC 1.A.1.8) family. In terms of assembly, homodimer; disulfide-linked. Heterodimer with KCNK2; disulfide-linked. In astrocytes, forms mostly heterodimeric potassium channels with KCNK2, with only a minor proportion of functional channels containing homodimeric KCNK1. Interacts with KCNK3 and KCNK9, forming functional heterodimeric channels. Interacts with GNG4. Identified in a complex with PSD and ARF6; interacts only with PSD that is bound to ARF6. Interacts with UBE2I. Sumoylation is controversial. Sumoylated by UBE2I. Not sumoylated when expressed in xenopus oocytes or mammalian cells. Sumoylation inactivates the channel, but does not interfere with expression at the cell membrane. Sumoylation of a single subunit is sufficient to silence the dimeric channel. Sumoylation of KCNK1 is sufficient to silence heterodimeric channels formed by KCNK1 and KCNK3 or KCNK9. Desumoylated by SENP1; this activates the channel. Desumoylated by SENP1; this strongly increases halothane-mediated activation of heterodimeric channels formed with KCNK9. SENP1 treatment has no effect.

The protein localises to the cell membrane. It localises to the recycling endosome. Its subcellular location is the synaptic cell membrane. It is found in the cytoplasmic vesicle. The protein resides in the perikaryon. The protein localises to the cell projection. It localises to the dendrite. Its subcellular location is the apical cell membrane. It carries out the reaction K(+)(in) = K(+)(out). The enzyme catalyses NH4(+)(in) = NH4(+)(out). The catalysed reaction is Na(+)(in) = Na(+)(out). It catalyses the reaction Rb(+)(in) = Rb(+)(out). It carries out the reaction Cs(+)(in) = Cs(+)(out). The enzyme catalyses Li(+)(in) = Li(+)(out). The catalysed reaction is L-glutamate(out) = L-glutamate(in). It catalyses the reaction chloride(in) = chloride(out). Its function is as follows. Ion channel that contributes to passive transmembrane potassium transport and to the regulation of the resting membrane potential in brain astrocytes, but also in kidney and in other tissues. Forms dimeric channels through which potassium ions pass in accordance with their electrochemical gradient. The channel is selective for K(+) ions at physiological potassium concentrations and at neutral pH, but becomes permeable to Na(+) at subphysiological K(+) levels and upon acidification of the extracellular medium. The homodimer has very low potassium channel activity, when expressed in heterologous systems, and can function as weakly inward rectifying potassium channel. Channel activity is modulated by activation of serotonin receptors. Heterodimeric channels containing KCNK1 and KCNK2 have much higher activity, and may represent the predominant form in astrocytes. Heterodimeric channels containing KCNK1 and KCNK3 or KCNK9 have much higher activity. Heterodimeric channels formed by KCNK1 and KCNK9 may contribute to halothane-sensitive currents. Mediates outward rectifying potassium currents in dentate gyrus granule cells and contributes to the regulation of their resting membrane potential. Contributes to the regulation of action potential firing in dentate gyrus granule cells and down-regulates their intrinsic excitability. In astrocytes, the heterodimer formed by KCNK1 and KCNK2 is required for rapid glutamate release in response to activation of G-protein coupled receptors, such as F2R and CNR1. Required for normal ion and water transport in the kidney. Contributes to the regulation of the resting membrane potential of pancreatic beta cells. The low channel activity of homodimeric KCNK1 may be due to sumoylation. The low channel activity may be due to rapid internalization from the cell membrane and retention in recycling endosomes. Permeable to monovalent cations with ion selectivity for K(+) &gt; Rb(+) &gt;&gt; NH4(+) &gt;&gt; Cs(+) = Na(+) = Li(+). The polypeptide is Potassium channel subfamily K member 1 (Bos taurus (Bovine)).